A 434-amino-acid chain; its full sequence is MESKNFKLPSPLATVIVGTQFGDEGKGKLVDYLSANYDIVVRYQGGANAGHTICFDGKSVVLHLVPSGIFHEGCTCVIGNGVVIDPVALLEEIKTVENLGYDVRGRLFISHNAHLIMPYHKLLDSLHESAQGDQKIGTTGRGIGPSYEDKVARKGIRVVDLLNPELLKEKLRENLSAKNKLLRNIYDREEIDVEAMVQEYEEFDKIIDPYVTNTQAYLTRELQAGKTVLLEGAQGCLLDVDHGTYPYVTSSNPTSGGACTGSGIAPNYIGKVIGITKAYMTRVGNGAFPTELLDETGELLGKIGHEFGATTGRKRRCGWLDLVALRYSLAINGVTEIALTKLDVLDSFEEIKVCTAYLLDGKELHDFPTDHQTLAQVTPVYTTLKGWMASNAAARTFEEMQLEAQRYVDFLEEQVQLPVTFISVGPGRDETVFR.

Residues 22-28 (GDEGKGK) and 50-52 (GHT) each bind GTP. D23 acts as the Proton acceptor in catalysis. Mg(2+)-binding residues include D23 and G50. IMP contacts are provided by residues 23–26 (DEGK), 48–51 (NAGH), T139, R153, Q234, T249, and R313. The active-site Proton donor is the H51. 309-315 (ATTGRKR) provides a ligand contact to substrate. GTP is bound by residues R315, 341–343 (KLD), and 423–425 (SVG).

Belongs to the adenylosuccinate synthetase family. As to quaternary structure, homodimer. Mg(2+) serves as cofactor.

It localises to the cytoplasm. The catalysed reaction is IMP + L-aspartate + GTP = N(6)-(1,2-dicarboxyethyl)-AMP + GDP + phosphate + 2 H(+). It participates in purine metabolism; AMP biosynthesis via de novo pathway; AMP from IMP: step 1/2. Plays an important role in the de novo pathway of purine nucleotide biosynthesis. Catalyzes the first committed step in the biosynthesis of AMP from IMP. This Chlorobium chlorochromatii (strain CaD3) protein is Adenylosuccinate synthetase.